Reading from the N-terminus, the 263-residue chain is Acyl-[acyl-carrier-protein]--UDP-N-acetylglucosamine O-acyltransferase (263 aa).

This sequence belongs to the transferase hexapeptide repeat family. LpxA subfamily. Homotrimer.

The protein localises to the cytoplasm. The catalysed reaction is a (3R)-hydroxyacyl-[ACP] + UDP-N-acetyl-alpha-D-glucosamine = a UDP-3-O-[(3R)-3-hydroxyacyl]-N-acetyl-alpha-D-glucosamine + holo-[ACP]. Its pathway is glycolipid biosynthesis; lipid IV(A) biosynthesis; lipid IV(A) from (3R)-3-hydroxytetradecanoyl-[acyl-carrier-protein] and UDP-N-acetyl-alpha-D-glucosamine: step 1/6. Involved in the biosynthesis of lipid A, a phosphorylated glycolipid that anchors the lipopolysaccharide to the outer membrane of the cell. The sequence is that of Acyl-[acyl-carrier-protein]--UDP-N-acetylglucosamine O-acyltransferase from Aeromonas salmonicida (strain A449).